The sequence spans 1203 residues: Transmembrane channel-like protein 2 (1203 aa).

Disordered stretches follow at residues 1 to 39 (MPKSGAHQPLVRHDTDDGGETGQSVKSLADVSEEEIDSR) and 64 to 90 (PHTRLGNPNFDDDDDEFDEEDDKEASK). Acidic residues predominate over residues 73–86 (FDDDDDEFDEEDDK). The chain crosses the membrane as a helical span at residues 191–213 (VLGVNITITFIMCMFVVIPEWLA). A glycan (N-linked (GlcNAc...) asparagine) is linked at Asn-225. 6 consecutive transmembrane segments (helical) span residues 276-298 (YRVPVAYFFCNIFILGFSLFIIL), 369-391 (FVARVLTNLFICAMYVFSIWAIM), 406-428 (ATAITISLITLVFPNIFDLLGKI), 441-463 (LGRVLVLYILNYYTLIYSLMLQL), 665-687 (MIWLGLFFVPLLPMLNNIKLIIL), and 714-736 (FFFALLILFLFLCTLPVGFVIAS). An N-linked (GlcNAc...) asparagine glycan is attached at Asn-748. The chain crosses the membrane as a helical span at residues 780–802 (IIIPVLVLLSLVIYFLIAMVTGL). Disordered stretches follow at residues 826–908 (ELAG…SLPP), 927–1039 (KYGR…IEKQ), 1059–1087 (ATVENSSQDPTRPPSTDDSLGDPALHEPL), and 1112–1203 (NDET…SDND). The segment covering 865–874 (NRSTAKSVSG) has biased composition (polar residues). Positions 898–908 (DSESTTSSLPP) are enriched in low complexity. Basic and acidic residues predominate over residues 927–945 (KYGRHDDIEMEEGGGRLRE). Composition is skewed to low complexity over residues 973–997 (QSFDQNSQSASASSSKSTTTAPSNS) and 1022–1035 (SASSSSSSHQPSSS). Over residues 1061 to 1076 (VENSSQDPTRPPSTDD) the composition is skewed to polar residues. 2 stretches are compositionally biased toward basic and acidic residues: residues 1133-1147 (SPRELKRLKREKDQQ) and 1172-1203 (PPSEKNDSDSSNRKYEMRVEKSPKKPKKSDND).

This sequence belongs to the TMC family.

The protein resides in the membrane. Its function is as follows. Probable ion channel. The protein is Transmembrane channel-like protein 2 (tmc-2) of Caenorhabditis elegans.